A 205-amino-acid chain; its full sequence is Holliday junction branch migration complex subunit RuvA (205 aa).

The interval 1 to 67 (MIGWLKGDVQ…ADNLQLFGFL (67 aa)) is domain I. Positions 68-146 (QLAERDLFRE…DSVASTGPER (79 aa)) are domain II. The tract at residues 147 to 155 (NQLDPVAPD) is flexible linker. Residues 155–205 (DLIATLETLGFETHEIRDALQRLNGMGGPQDGDDDDAWLRACIKLMSSTDP) are domain III.

The protein belongs to the RuvA family. In terms of assembly, homotetramer. Forms an RuvA(8)-RuvB(12)-Holliday junction (HJ) complex. HJ DNA is sandwiched between 2 RuvA tetramers; dsDNA enters through RuvA and exits via RuvB. An RuvB hexamer assembles on each DNA strand where it exits the tetramer. Each RuvB hexamer is contacted by two RuvA subunits (via domain III) on 2 adjacent RuvB subunits; this complex drives branch migration. In the full resolvosome a probable DNA-RuvA(4)-RuvB(12)-RuvC(2) complex forms which resolves the HJ.

The protein resides in the cytoplasm. Functionally, the RuvA-RuvB-RuvC complex processes Holliday junction (HJ) DNA during genetic recombination and DNA repair, while the RuvA-RuvB complex plays an important role in the rescue of blocked DNA replication forks via replication fork reversal (RFR). RuvA specifically binds to HJ cruciform DNA, conferring on it an open structure. The RuvB hexamer acts as an ATP-dependent pump, pulling dsDNA into and through the RuvAB complex. HJ branch migration allows RuvC to scan DNA until it finds its consensus sequence, where it cleaves and resolves the cruciform DNA. This chain is Holliday junction branch migration complex subunit RuvA, found in Parasynechococcus marenigrum (strain WH8102).